A 418-amino-acid polypeptide reads, in one-letter code: Adenylosuccinate synthetase (418 aa).

GTP is bound by residues 12–18 (GDEGKGK) and 40–42 (GHT). The active-site Proton acceptor is the Asp13. Residues Asp13 and Gly40 each coordinate Mg(2+). Residues 13–16 (DEGK), 38–41 (NAGH), Thr128, Arg142, Gln221, Thr236, and Arg299 contribute to the IMP site. The active-site Proton donor is the His41. 295–301 (ATTGRNR) contacts substrate. GTP is bound by residues Arg301, 327–329 (KAD), and 399–401 (SYG).

This sequence belongs to the adenylosuccinate synthetase family. In terms of assembly, homodimer. Mg(2+) is required as a cofactor.

It localises to the cytoplasm. The catalysed reaction is IMP + L-aspartate + GTP = N(6)-(1,2-dicarboxyethyl)-AMP + GDP + phosphate + 2 H(+). It functions in the pathway purine metabolism; AMP biosynthesis via de novo pathway; AMP from IMP: step 1/2. Its function is as follows. Plays an important role in the de novo pathway of purine nucleotide biosynthesis. Catalyzes the first committed step in the biosynthesis of AMP from IMP. The polypeptide is Adenylosuccinate synthetase (Finegoldia magna (strain ATCC 29328 / DSM 20472 / WAL 2508) (Peptostreptococcus magnus)).